The chain runs to 276 residues: MGLAGTKIKQRFGNDPRNTNWSNDTSRFGHQYLAKMGWQQGSGLGLVSHALTTHVKVSIKDDNLGLGAKLHKRKANGDGGLEEEGTAGLDAFQRILGRLNGKENVVNKVLDNVRDDDIINGKWGMRFVKGETLSSTWDKESKKLISYKNIEDDGKKSRKRKADESETKEDKKTLKKHKKEKKDKKEKKEKKKKKEKKDKKDKKDKKNKKDKKDKKDKKDKKDKIRTGSDETLVSKESSATPPPIATRLSARSKWIKQKRASVMDSKALNEIFMITN.

The segment at 1-23 (MGLAGTKIKQRFGNDPRNTNWSN) is disordered. Residues 25-71 (TSRFGHQYLAKMGWQQGSGLGLVSHALTTHVKVSIKDDNLGLGAKLH) enclose the G-patch domain. Residues 152–172 (DDGKKSRKRKADESETKEDKK) are compositionally biased toward basic and acidic residues. Residues 152-261 (DDGKKSRKRK…SKWIKQKRAS (110 aa)) are disordered. The segment covering 173–218 (TLKKHKKEKKDKKEKKEKKKKKEKKDKKDKKDKKNKKDKKDKKDKK) has biased composition (basic residues). Residues 219–228 (DKKDKIRTGS) are compositionally biased toward basic and acidic residues. The segment covering 229–239 (DETLVSKESSA) has biased composition (polar residues).

This sequence belongs to the PINX1 family.

The protein resides in the nucleus. It localises to the nucleolus. Functionally, involved in rRNA-processing at A0, A1 and A2 sites and negatively regulates telomerase. This Candida albicans (strain SC5314 / ATCC MYA-2876) (Yeast) protein is Protein PXR1 (PXR1).